The sequence spans 468 residues: ATP synthase subunit beta (468 aa).

Position 155-162 (155-162) interacts with ATP; the sequence is GGAGVGKT.

It belongs to the ATPase alpha/beta chains family. As to quaternary structure, F-type ATPases have 2 components, CF(1) - the catalytic core - and CF(0) - the membrane proton channel. CF(1) has five subunits: alpha(3), beta(3), gamma(1), delta(1), epsilon(1). CF(0) has three main subunits: a(1), b(2) and c(9-12). The alpha and beta chains form an alternating ring which encloses part of the gamma chain. CF(1) is attached to CF(0) by a central stalk formed by the gamma and epsilon chains, while a peripheral stalk is formed by the delta and b chains.

The protein resides in the cell membrane. It catalyses the reaction ATP + H2O + 4 H(+)(in) = ADP + phosphate + 5 H(+)(out). Produces ATP from ADP in the presence of a proton gradient across the membrane. The catalytic sites are hosted primarily by the beta subunits. The chain is ATP synthase subunit beta from Bacillus cereus (strain ATCC 10987 / NRS 248).